A 582-amino-acid polypeptide reads, in one-letter code: Poly(A) RNA polymerase, mitochondrial (582 aa).

A mitochondrion-targeting transit peptide spans 1 to 37 (MAVPGVGLLTRLNLCARRRTRVQRPIVRLLSCPGTVA). An N6-acetyllysine modification is found at lysine 90. ATP contacts are provided by residues 107–109 (YES) and 241–242 (GC). Mg(2+) is bound by residues aspartate 243 and aspartate 245. The PAP-associated domain occupies 437–483 (LELLLKEFFEYFGNFAFDKNSINIRQGREQNKPDSSPLYIQNPFETS).

This sequence belongs to the DNA polymerase type-B-like family. Homodimer. The cofactor is Mg(2+). Mn(2+) serves as cofactor. As to expression, ubiquitous, with stronger expression in tissues with high energy requirements: heart, brain, and skeletal muscle.

The protein localises to the cytoplasm. The protein resides in the mitochondrion. It carries out the reaction RNA(n) + ATP = RNA(n)-3'-adenine ribonucleotide + diphosphate. In terms of biological role, polymerase that creates the 3' poly(A) tail of mitochondrial transcripts. Can use all four nucleotides, but has higher activity with ATP and UTP (in vitro). Plays a role in replication-dependent histone mRNA degradation. May be involved in the terminal uridylation of mature histone mRNAs before their degradation is initiated. Might be responsible for the creation of some UAA stop codons which are not encoded in mtDNA. This is Poly(A) RNA polymerase, mitochondrial (MTPAP) from Homo sapiens (Human).